A 382-amino-acid chain; its full sequence is Lipid-A-disaccharide synthase (382 aa).

Belongs to the LpxB family.

It catalyses the reaction 2-N,3-O-bis[(3R)-3-hydroxytetradecanoyl]-alpha-D-glucosaminyl 1-phosphate + UDP-2-N,3-O-bis[(3R)-3-hydroxytetradecanoyl]-alpha-D-glucosamine = lipid A disaccharide (E. coli) + UDP + H(+). The catalysed reaction is a lipid X + a UDP-2-N,3-O-bis[(3R)-3-hydroxyacyl]-alpha-D-glucosamine = a lipid A disaccharide + UDP + H(+). It functions in the pathway glycolipid biosynthesis; lipid IV(A) biosynthesis; lipid IV(A) from (3R)-3-hydroxytetradecanoyl-[acyl-carrier-protein] and UDP-N-acetyl-alpha-D-glucosamine: step 5/6. Functionally, condensation of UDP-2,3-diacylglucosamine and 2,3-diacylglucosamine-1-phosphate to form lipid A disaccharide, a precursor of lipid A, a phosphorylated glycolipid that anchors the lipopolysaccharide to the outer membrane of the cell. The sequence is that of Lipid-A-disaccharide synthase from Shigella flexneri.